The primary structure comprises 320 residues: Mitochondrial ribosome-associated GTPase 1 (320 aa).

Residues Leu37–Pro209 form the CP-type G domain. Residues Asn81 to Asp84, Asn153 to Ser158, and Gly205 each bind GTP.

Belongs to the TRAFAC class YlqF/YawG GTPase family. MTG1 subfamily.

It localises to the mitochondrion inner membrane. Plays a role in the regulation of the mitochondrial ribosome assembly and of translational activity. Displays mitochondrial GTPase activity. The polypeptide is Mitochondrial ribosome-associated GTPase 1 (Ictalurus punctatus (Channel catfish)).